A 1403-amino-acid chain; its full sequence is Perilipin-4 (1403 aa).

Residues 1–21 (MSASGDGTRVPPKSKGKTLSS) are disordered. Serine 25 and serine 31 each carry phosphoserine. The disordered stretch occupies residues 33 to 70 (RNLVSHTHSSTSTKDLQTATDPSGTPAPSSKVSTNSQM). 29 consecutive repeat copies span residues 104 to 136 (GVFG…AVSG), 137 to 169 (GVMG…TVTT), 170 to 202 (GVMG…TVAT), 203 to 235 (GLAG…TVTT), 236 to 268 (GLTG…TVTT), 269 to 301 (GLTG…TVCA), 302 to 334 (GATG…TVTT), 335 to 367 (GLTG…TVTT), 368 to 400 (GLTG…TVCA), 401 to 433 (GLTG…TVTT), 434 to 466 (GLTG…TVTT), 467 to 499 (GLTG…TVTT), 500 to 532 (GLTG…TVTT), 533 to 565 (GLTG…TVCA), 566 to 598 (GLTG…TVTT), 599 to 631 (GLTG…TVTT), 632 to 664 (GLTG…TVTT), 665 to 697 (GLTG…TVCA), 698 to 730 (GATG…TVTT), 731 to 763 (GLTG…TVTT), 764 to 796 (GLTG…NVYA), 797 to 829 (GVTG…TVTT), 830 to 862 (GLTG…TVTT), 863 to 895 (GLTG…TVCA), 896 to 928 (GLTG…TVTT), 929 to 961 (GLTG…TVTT), 962 to 994 (GLTG…SICA), 995 to 1027 (GATG…TAKG), and 1028 to 1060 (TVQT…MAKG). The 29 X 33 AA approximate tandem repeat stretch occupies residues 104–1060 (GVFGIMDAAK…VTSAMNMAKG (957 aa)). The residue at position 1281 (serine 1281) is a Phosphoserine. Threonine 1287 bears the Phosphothreonine mark.

It belongs to the perilipin family. Specifically expressed in white adipose tissue and also weakly detected in heart and skeletal muscle (at protein level).

The protein localises to the cell membrane. It is found in the cytoplasm. It localises to the lipid droplet. In terms of biological role, may play a role in triacylglycerol packaging into adipocytes. May function as a coat protein involved in the biogenesis of lipid droplets. This chain is Perilipin-4 (Plin4), found in Mus musculus (Mouse).